The following is a 62-amino-acid chain: Large ribosomal subunit protein uL30 (62 aa).

The protein belongs to the universal ribosomal protein uL30 family. In terms of assembly, part of the 50S ribosomal subunit.

This chain is Large ribosomal subunit protein uL30, found in Geobacillus thermodenitrificans (strain NG80-2).